A 647-amino-acid polypeptide reads, in one-letter code: 1-deoxy-D-xylulose-5-phosphate synthase (647 aa).

Thiamine diphosphate-binding positions include His-74 and 115–117 (GHS). Position 146 (Asp-146) interacts with Mg(2+). Thiamine diphosphate contacts are provided by residues 147 to 148 (GA), Asn-175, Tyr-286, and Glu-367. Asn-175 serves as a coordination point for Mg(2+).

This sequence belongs to the transketolase family. DXPS subfamily. Homodimer. Mg(2+) serves as cofactor. Thiamine diphosphate is required as a cofactor.

The catalysed reaction is D-glyceraldehyde 3-phosphate + pyruvate + H(+) = 1-deoxy-D-xylulose 5-phosphate + CO2. It participates in metabolic intermediate biosynthesis; 1-deoxy-D-xylulose 5-phosphate biosynthesis; 1-deoxy-D-xylulose 5-phosphate from D-glyceraldehyde 3-phosphate and pyruvate: step 1/1. Functionally, catalyzes the acyloin condensation reaction between C atoms 2 and 3 of pyruvate and glyceraldehyde 3-phosphate to yield 1-deoxy-D-xylulose-5-phosphate (DXP). In Heliobacterium modesticaldum (strain ATCC 51547 / Ice1), this protein is 1-deoxy-D-xylulose-5-phosphate synthase.